Reading from the N-terminus, the 441-residue chain is Vacuolar cation/proton exchanger 5 (441 aa).

Residue glycine 2 is the site of N-myristoyl glycine attachment. Residues 2–69 (GCCKVPALIQ…PNNSVLQSFK (68 aa)) lie on the Cytoplasmic side of the membrane. S-palmitoyl cysteine attachment occurs at residues cysteine 3 and cysteine 4. The helical transmembrane segment at 70–90 (IVILSNKLNLLLPFGPLAILL) threads the bilayer. The Extracellular segment spans residues 91–97 (HYLTDNK). The chain crosses the membrane as a helical span at residues 98–118 (GWIFLLSLVGITPLAERLGYA). The Cytoplasmic segment spans residues 119 to 129 (TEQLACYTGST). The chain crosses the membrane as a helical span at residues 130–150 (VGGLLNATFGNVTELIISIFA). The segment at 139–174 (GNVTELIISIFALKSGMIRVVQLTLLGSILSNMLLV) is cation selection. Over 151–165 (LKSGMIRVVQLTLLG) the chain is Extracellular. The chain crosses the membrane as a helical span at residues 166–186 (SILSNMLLVLGCAFFCGGLVF). Topologically, residues 187–197 (SQKEQVFDKGN) are cytoplasmic. Residues 198 to 218 (AVVNSGLLLMAVMGLLFPAVL) traverse the membrane as a helical segment. Over 219 to 231 (HYTHSEVHAGSSE) the chain is Extracellular. The chain crosses the membrane as a helical span at residues 232-252 (LALSRFSSCIMLVAYAAYLFF). At 253-286 (QLKSQPSSYTPLTEETNQNEETSDDDEDPEISKW) the chain is on the cytoplasmic side. Residues 287–307 (EAIIWLSILTAWVSLLSGYLV) traverse the membrane as a helical segment. The Extracellular segment spans residues 308-311 (DAIE). Residues 312–332 (GASVSWKIPISFISVILLPIV) form a helical membrane-spanning segment. Over 333–354 (GNAAEHAGAIMFAMKDKLDLSL) the chain is Cytoplasmic. The cation selection stretch occupies residues 333-368 (GNAAEHAGAIMFAMKDKLDLSLGVAIGSSIQISMFA). Residues 355–375 (GVAIGSSIQISMFAVPFCVVI) traverse the membrane as a helical segment. Over 376-384 (GWMMGAQMD) the chain is Extracellular. A helical membrane pass occupies residues 385-405 (LNFQLFETATLFITVIVVAFF). Topologically, residues 406 to 412 (LQEGTSN) are cytoplasmic. A helical transmembrane segment spans residues 413–433 (YFKGLMLILCYLIVAASFFVH). Residues 434–441 (EDPHQDDI) lie on the Extracellular side of the membrane.

The protein belongs to the Ca(2+):cation antiporter (CaCA) (TC 2.A.19) family. Cation/proton exchanger (CAX) subfamily.

It localises to the vacuole membrane. Functionally, vacuolar cation/proton exchanger (CAX). Translocates Ca(2+) and other metal ions into vacuoles using the proton gradient formed by H(+)-ATPase and H(+)-pyrophosphatase. The polypeptide is Vacuolar cation/proton exchanger 5 (CAX5) (Arabidopsis thaliana (Mouse-ear cress)).